Consider the following 212-residue polypeptide: Uracil phosphoribosyltransferase (212 aa).

Residues Arg-78, Arg-103, and 130–138 (DPMLATGGS) each bind 5-phospho-alpha-D-ribose 1-diphosphate. Residues Ile-193 and 198-200 (GDA) each bind uracil. Residue Asp-199 coordinates 5-phospho-alpha-D-ribose 1-diphosphate.

It belongs to the UPRTase family. Requires Mg(2+) as cofactor.

It carries out the reaction UMP + diphosphate = 5-phospho-alpha-D-ribose 1-diphosphate + uracil. It participates in pyrimidine metabolism; UMP biosynthesis via salvage pathway; UMP from uracil: step 1/1. Its activity is regulated as follows. Allosterically activated by GTP. In terms of biological role, catalyzes the conversion of uracil and 5-phospho-alpha-D-ribose 1-diphosphate (PRPP) to UMP and diphosphate. The polypeptide is Uracil phosphoribosyltransferase (Azotobacter vinelandii (strain DJ / ATCC BAA-1303)).